A 368-amino-acid polypeptide reads, in one-letter code: uncharacterized protein (368 aa).

5 helical membrane-spanning segments follow: residues 22 to 42, 74 to 94, 104 to 124, 144 to 164, and 168 to 188; these read VAGI…FTLI, FVKP…LLVL, FLKT…LNLF, VGDF…GASL, and WGVN…AVSL.

It belongs to the MscS (TC 1.A.23) family.

The protein localises to the cell membrane. This is an uncharacterized protein from Aquifex aeolicus (strain VF5).